The following is a 478-amino-acid chain: 5-hydroxytryptamine receptor 3A (478 aa).

The N-terminal stretch at 1–23 is a signal peptide; that stretch reads MLLWVQQALLALLLPTLLAQGEA. Residues 24-241 are Extracellular-facing; that stretch reads RRSRNTTRPA…MKFYVVIRRR (218 aa). 4 N-linked (GlcNAc...) asparagine glycosylation sites follow: asparagine 28, asparagine 104, asparagine 170, and asparagine 186. A disulfide bridge links cysteine 157 with cysteine 171. A helical membrane pass occupies residues 242 to 268; it reads PLFYVVSLLLPSIFLMVMDIVGFYLPP. The Cytoplasmic segment spans residues 269 to 273; the sequence is NSGER. The chain crosses the membrane as a helical span at residues 274–292; the sequence is VSFKITLLLGYSVFLIIVS. The Extracellular segment spans residues 293-302; the sequence is DTLPATAIGT. Residues 303 to 321 form a helical membrane-spanning segment; the sequence is PLIGVYFVVCMALLVISLA. Over 322–455 the chain is Cytoplasmic; that stretch reads ETIFIVRLVH…GSVLDKLLFH (134 aa). The disordered stretch occupies residues 389–408; it reads GGPQDFEKSPRDRCSPPPPP. Residues 393-402 show a composition bias toward basic and acidic residues; the sequence is DFEKSPRDRC. The tract at residues 414–450 is HA-stretch; determines single-channel conductance in 5-HT3 receptors; the sequence is AVCGLLQELSSIRQFLEKRDEIREVARDWLRVGSVLD. A helical transmembrane segment spans residues 456 to 475; sequence IYLLAVLAYSITLVMLWSIW. The Extracellular portion of the chain corresponds to 476 to 478; that stretch reads QYA.

This sequence belongs to the ligand-gated ion channel (TC 1.A.9) family. 5-hydroxytryptamine receptor (TC 1.A.9.2) subfamily. HTR3A sub-subfamily. As to quaternary structure, forms homopentameric as well as heteropentameric serotonin-activated cation-selective channel complexes with HTR3B or HTR3C or HTR3D or HTR3E. The homomeric complex is functional but exhibits low conductance with modified voltage dependence, and decreased agonist and antagonist affinity. Heteropentameric complexes display properties which resemble that of neuronal serotonin-activated channels in vivo. Interacts with RIC3. Expressed in cerebral cortex, amygdala, hippocampus, and testis. Detected in monocytes of the spleen and tonsil, in small and large intestine, uterus, prostate, ovary and placenta.

The protein resides in the postsynaptic cell membrane. The protein localises to the cell membrane. The catalysed reaction is Na(+)(in) = Na(+)(out). The enzyme catalyses K(+)(in) = K(+)(out). It carries out the reaction Ca(2+)(in) = Ca(2+)(out). It catalyses the reaction Mg(2+)(in) = Mg(2+)(out). Functionally, forms serotonin (5-hydroxytryptamine/5-HT3)-activated cation-selective channel complexes, which when activated cause fast, depolarizing responses in neurons. This Homo sapiens (Human) protein is 5-hydroxytryptamine receptor 3A.